The chain runs to 374 residues: CMP-N-acetylneuraminate-beta-1,4-galactoside alpha-2,3-sialyltransferase (374 aa).

Residues 1-8 (MGLLVFVR) lie on the Cytoplasmic side of the membrane. The chain crosses the membrane as a helical; Signal-anchor for type II membrane protein span at residues 9–28 (NLLLALCLFLVLGFLYYSAW). Over 29 to 374 (KLHLLQWEDS…RVITDLSSGI (346 aa)) the chain is Lumenal. N79 and N170 each carry an N-linked (GlcNAc...) asparagine glycan. The cysteines at positions 159 and 313 are disulfide-linked.

Belongs to the glycosyltransferase 29 family. In terms of processing, the soluble form derives from the membrane form by proteolytic processing. Found in all tissues tested. High expression found in brain, liver, kidney, colon, heart and lung.

The protein resides in the golgi apparatus. It is found in the golgi stack membrane. The protein localises to the secreted. It carries out the reaction a beta-D-galactosyl-(1-&gt;4)-N-acetyl-beta-D-glucosaminyl derivative + CMP-N-acetyl-beta-neuraminate = an N-acetyl-alpha-neuraminyl-(2-&gt;3)-beta-D-galactosyl-(1-&gt;4)-N-acetyl-beta-D-glucosaminyl derivative + CMP + H(+). It functions in the pathway protein modification; protein glycosylation. Its function is as follows. Catalyzes the formation of the NeuAc-alpha-2,3-Gal-beta-1,4-GlcNAc-, NeuAc-alpha-2,3-Gal-beta-1,3-GlcNAc- and NeuAc-alpha-2,3-Gal-beta-1,3-GalNAc- sequences found in terminal carbohydrate groups of glycoproteins and glycolipids. The highest activity is toward Gal-beta-1,3-GlcNAc and the lowest toward Gal-beta-1,3-GalNAc. This is CMP-N-acetylneuraminate-beta-1,4-galactoside alpha-2,3-sialyltransferase (St3gal3) from Rattus norvegicus (Rat).